The primary structure comprises 205 residues: Tic20 family protein Ycf60 (205 aa).

5 helical membrane-spanning segments follow: residues 5-25 (LFVNILFGTACIIIFGLVILI), 54-74 (AISCLIYFLPLLEGIAQFGIV), 102-122 (LIGFCIFITLYLIFVRGIIQI), 130-150 (IVQALLLYLLDSVIGTVLTSL), and 163-183 (LADTLLLITFMISIYAGTDAL).

The protein belongs to the Tic20 family.

It is found in the plastid. Its subcellular location is the chloroplast membrane. This Cyanidium caldarium (Red alga) protein is Tic20 family protein Ycf60 (ycf60).